The sequence spans 662 residues: Transmembrane 9 superfamily member 2 (662 aa).

The N-terminal stretch at 1–28 (MSSRPPASPPAQGSRLLLLSLLLLGTVP) is a signal peptide. The Lumenal portion of the chain corresponds to 29-299 (GPRPGSAFYL…LESMPHTHIQ (271 aa)). Residues 300-320 (WFSIMNSLVIVLFLSGMVAMI) form a helical membrane-spanning segment. The Cytoplasmic segment spans residues 321-373 (MLRTLHKDIARYNQMDSTEDAQEEFGWKLVHGDIFRPPRKGMLLSVFLGSGTQ). The chain crosses the membrane as a helical span at residues 374–394 (ILIMTFVTLFFACLGFLSPAN). Residues 395–397 (RGA) are Lumenal-facing. A helical transmembrane segment spans residues 398–418 (LMTCAVVLWVLLGTPAGYVAA). Residues 419 to 436 (RFYKSFGGEKWKTNVLLT) are Cytoplasmic-facing. A helical membrane pass occupies residues 437-457 (SFLCPGIVFADFFIMNLILWG). At 458–465 (EGSSAAIP) the chain is on the lumenal side. The helical transmembrane segment at 466-486 (FGTLVAILALWFCISVPLTFI) threads the bilayer. Residues 487–521 (GAYFGFKKNAIEHPVRTNQIPRQIPEQSFYTKPLP) lie on the Cytoplasmic side of the membrane. A helical membrane pass occupies residues 522–542 (GIIMGGILPFGCIFIQLFFIL). The Lumenal segment spans residues 543 to 553 (NSIWSHQMYYM). A helical transmembrane segment spans residues 554–574 (FGFLFLVFIILVITCSEATIL). Over 575-590 (LCYFHLCAEDYHWQWR) the chain is Cytoplasmic. The chain crosses the membrane as a helical span at residues 591–611 (SFLTSGFTAVYFLIYAIHYFF). Topologically, residues 612–630 (SKLQITGTASTILYFGYTM) are lumenal. The helical transmembrane segment at 631 to 651 (IMVLIFFLFTGTIGFFACFWF) threads the bilayer. Residues 652 to 662 (VTKIYSVVKVD) lie on the Cytoplasmic side of the membrane.

This sequence belongs to the nonaspanin (TM9SF) (TC 9.A.2) family.

It is found in the endosome membrane. The protein localises to the golgi outpost. Its subcellular location is the cytoplasm. The protein resides in the cytoskeleton. It localises to the microtubule organizing center. In the intracellular compartments, may function as a channel or small molecule transporter. The chain is Transmembrane 9 superfamily member 2 (Tm9sf2) from Mus musculus (Mouse).